The primary structure comprises 1041 residues: MFASTLRKTFVFLGLATYSAAALTTTSNSTHYTISNSRFSVAVAKSNGHVVDANLDGQDLLGPLSGNSGKGPYLDCSCTPEGFWTPGAEPALVNGTDSTGTPYVGVIMTDTYETTNQTLSQYLFLRGEETGLHAFSRVTYYNESDYFLRGLGELRTLFRPNTNLWTHFSGSEGNYGPMPLSSTEKITVQDATTYLGDTTDDPYVSQYSDYFTKYTLTESWRDHDVHGHFSNGSTSGDGNTYGAWLVHNTRETYYGGPLHADLVVDGIVYNYIVSGHYGAPNPNLTHGFDRTFGPQYYHFNSGGPGTTLEELRADAAQYASPEWNAEFYDSIAKHIPNYVPSTGRTTFRGKVNLPKGAKKPIIVLSENEQDFQLNVFKKDSLQYWAEIDGSGAFTIPRVVKGTYRVTIYADEIFGWFIKDNVKVIGSNAHTFTWKEETAGKEIWRIGVPDKSSGEFLHGYAPDTSKPLQPEQYRIYWGKYDYPSDFPEGVNYHVGKSDPAKDLNYIHWSFFPSQGNHLRNEPYYQNVNNWTITFDLTASQLRNTKTATFTVQLAGTRNANGNSKWNPDPAKYNNLPWTVNVNGIYEDTWEIPYWRSGSCGVRSGVQCQNTEHKFVFDAGKLRKGRNEFVLSLPFNATSVETALLPNSLYVQVVSMEAVSVSNDMRVLVQAFMPLVTWGTAVEKRVLLTGIVSVSAMAKEDYPMISRPCPRKGGTRRRKKERKKEGKKQGRTVLDALLQRSEQDSFWSRFCRSPIESVAQYVYGQGSTALRKKTTDNLVRVVCVSDTHNTKPNLPDGDILIHAGDLTESGTKEELEKQIYWLDSQPHRYKIVIAGNHETFLDRNYHSHHGNERVTMDWKSLIYLENTSAILDLGAGHQLKVFGSPYTPKHGNGAFQYPRTDTTTWEEIPKDTDLLVTHGPPKAHLDLGHLGCRVLRQALWEMESRPLLHVFGHIHGGYGKEVVCWDLCQRAYEAIMDGESRWWNLCVLFYCWILRLFFDWTADGRATVLVNAATVGGVRDLKRREAICVDIQAGSKRFLSGCT.

The N-terminal stretch at 1 to 21 is a signal peptide; it reads MFASTLRKTFVFLGLATYSAA. N-linked (GlcNAc...) asparagine glycosylation is found at Asn-28, Asn-94, Asn-116, Asn-142, Asn-231, Asn-283, Asn-528, and Asn-634. Residues 703–728 form a disordered region; sequence ISRPCPRKGGTRRRKKERKKEGKKQG. Residues 707–720 show a composition bias toward basic residues; sequence CPRKGGTRRRKKER. Residue Asn-864 is glycosylated (N-linked (GlcNAc...) asparagine).

The protein belongs to the polysaccharide lyase 4 family.

It localises to the secreted. It catalyses the reaction Endotype eliminative cleavage of L-alpha-rhamnopyranosyl-(1-&gt;4)-alpha-D-galactopyranosyluronic acid bonds of rhamnogalacturonan I domains in ramified hairy regions of pectin leaving L-rhamnopyranose at the reducing end and 4-deoxy-4,5-unsaturated D-galactopyranosyluronic acid at the non-reducing end.. Its function is as follows. Pectinolytic enzymes consist of four classes of enzymes: pectin lyase, polygalacturonase, pectin methylesterase and rhamnogalacturonase. Degrades the rhamnogalacturonan I (RG-I) backbone of pectin. The chain is Probable rhamnogalacturonate lyase C (rglC) from Emericella nidulans (strain FGSC A4 / ATCC 38163 / CBS 112.46 / NRRL 194 / M139) (Aspergillus nidulans).